The chain runs to 217 residues: Oxygen regulatory protein NreC (217 aa).

A Response regulatory domain is found at 2 to 119 (KIVIADDHAV…QLISAVRTVY (118 aa)). A 4-aspartylphosphate modification is found at Asp53. Residues 148–213 (TNDPFRILSK…ELVEYALKKK (66 aa)) enclose the HTH luxR-type domain. A DNA-binding region (H-T-H motif) is located at residues 172 to 191 (NKEIAEKLFVSVKTVEAHKT).

In terms of processing, phosphorylated by NreB.

The protein resides in the cytoplasm. In terms of biological role, member of the two-component regulatory system NreB/NreC involved in the control of dissimilatory nitrate/nitrite reduction in response to oxygen. Phosphorylated NreC binds to a GC-rich palindromic sequence at the promoters of the nitrate (narGHJI) and nitrite (nir) reductase operons, as well as the putative nitrate transporter gene narT, and activates their expression. The sequence is that of Oxygen regulatory protein NreC (nreC) from Staphylococcus carnosus (strain TM300).